A 685-amino-acid chain; its full sequence is Serine/threonine-protein kinase PLK2 (685 aa).

The interval 24-71 (KGCGADSKKKRPPQPPEESQPPQSQAQVPPAAAHHHHHHSHSGPEISR) is disordered. Over residues 43-55 (QPPQSQAQVPPAA) the composition is skewed to low complexity. One can recognise a Protein kinase domain in the interval 82–334 (YCRGKVLGKG…LDDIIRHDFF (253 aa)). ATP-binding positions include 88–96 (LGKGGFAKC) and lysine 111. The active-site Proton acceptor is aspartate 205. Threonine 239 bears the Phosphothreonine mark. The interval 406-433 (SITQQPSKHRTDEELQPPTTTVARSGTP) is disordered. POLO box domains are found at residues 503–581 (WVTK…YMEE) and 601–685 (YLLQ…QRCN).

This sequence belongs to the protein kinase superfamily. Ser/Thr protein kinase family. CDC5/Polo subfamily. Interacts with NSF; causing NSF dissociation from GRIA2. Interacts with CIB1. In terms of processing, catalytic activity is enhanced by phosphorylation of Thr-239.

The protein resides in the cytoplasm. Its subcellular location is the cytoskeleton. It localises to the microtubule organizing center. The protein localises to the centrosome. It is found in the centriole. The protein resides in the cell projection. Its subcellular location is the dendrite. It catalyses the reaction L-seryl-[protein] + ATP = O-phospho-L-seryl-[protein] + ADP + H(+). The catalysed reaction is L-threonyl-[protein] + ATP = O-phospho-L-threonyl-[protein] + ADP + H(+). Activated by phosphorylation of Thr-239. Once activated, activity is stimulated by binding target proteins. Tumor suppressor serine/threonine-protein kinase involved in synaptic plasticity, centriole duplication and G1/S phase transition. Polo-like kinases act by binding and phosphorylating proteins that are already phosphorylated on a specific motif recognized by the POLO box domains. Phosphorylates CPAP, NPM1, RAPGEF2, RASGRF1, SNCA, SIPA1L1 and SYNGAP1. Plays a key role in synaptic plasticity and memory by regulating the Ras and Rap protein signaling: required for overactivity-dependent spine remodeling by phosphorylating the Ras activator RASGRF1 and the Rap inhibitor SIPA1L1 leading to their degradation by the proteasome. Conversely, phosphorylates the Rap activator RAPGEF2 and the Ras inhibitor SYNGAP1, promoting their activity. Also regulates synaptic plasticity independently of kinase activity, via its interaction with NSF that disrupts the interaction between NSF and the GRIA2 subunit of AMPARs, leading to a rapid rundown of AMPAR-mediated current that occludes long term depression. Required for procentriole formation and centriole duplication by phosphorylating CPAP and NPM1, respectively. Its induction by p53/TP53 suggests that it may participate in the mitotic checkpoint following stress. The chain is Serine/threonine-protein kinase PLK2 (PLK2) from Pongo abelii (Sumatran orangutan).